We begin with the raw amino-acid sequence, 79 residues long: Ribonuclease P protein component 1 (79 aa).

The protein belongs to the eukaryotic/archaeal RNase P protein component 1 family. Consists of a catalytic RNA component and at least 4-5 protein subunits.

The protein localises to the cytoplasm. It catalyses the reaction Endonucleolytic cleavage of RNA, removing 5'-extranucleotides from tRNA precursor.. Its function is as follows. Part of ribonuclease P, a protein complex that generates mature tRNA molecules by cleaving their 5'-ends. The chain is Ribonuclease P protein component 1 from Saccharolobus solfataricus (strain ATCC 35092 / DSM 1617 / JCM 11322 / P2) (Sulfolobus solfataricus).